The chain runs to 139 residues: Large ribosomal subunit protein uL16 (139 aa).

The protein belongs to the universal ribosomal protein uL16 family. Part of the 50S ribosomal subunit.

Binds 23S rRNA and is also seen to make contacts with the A and possibly P site tRNAs. This Gloeothece citriformis (strain PCC 7424) (Cyanothece sp. (strain PCC 7424)) protein is Large ribosomal subunit protein uL16.